A 125-amino-acid chain; its full sequence is Phosphoribosyl-AMP cyclohydrolase (125 aa).

Asp-74 is a Mg(2+) binding site. Zn(2+) is bound at residue Cys-75. Mg(2+) contacts are provided by Asp-76 and Asp-78. Residues Cys-92 and Cys-99 each contribute to the Zn(2+) site.

This sequence belongs to the PRA-CH family. Homodimer. The cofactor is Mg(2+). Zn(2+) serves as cofactor.

The protein localises to the cytoplasm. The enzyme catalyses 1-(5-phospho-beta-D-ribosyl)-5'-AMP + H2O = 1-(5-phospho-beta-D-ribosyl)-5-[(5-phospho-beta-D-ribosylamino)methylideneamino]imidazole-4-carboxamide. Its pathway is amino-acid biosynthesis; L-histidine biosynthesis; L-histidine from 5-phospho-alpha-D-ribose 1-diphosphate: step 3/9. Functionally, catalyzes the hydrolysis of the adenine ring of phosphoribosyl-AMP. In Desulfatibacillum aliphaticivorans, this protein is Phosphoribosyl-AMP cyclohydrolase.